Consider the following 410-residue polypeptide: MVLSQRQRDELNRAIADYLRSNGYEEAYSVFKKEAELDMNEELDIKYAGLLEKKWTSVIRLQKKVMELESKLNEAKEEFTSGGPIGQKRDPKEWIPRPPEKYALSGHRSPVTRVIFHPVFSVMVTASEDATIKVWDYETGDFERTLKGHTDSVQDISFDHSGKLLASCSADMTIKLWDFQGFECLRTMHGHDHNVSSVAIMPNGDHIVSASRDKTIKMWEVQTGYCVKTFTGHREWVRMVRPNQDGTLIASCSNDQTVRVWVVATKECKAELREHEHVVECISWAPESSYSTISDATGSETKRSGKPGPFLLSGSRDKTIKMWDISIGMCLMTLVGHDNWVRGVQFHPGGKFILSCADDKTIRIWDYKNKRCMKTLNAHEHFVTSLDFHKTAPYVVTGSVDQTVKVWECR.

The LisH domain occupies 7 to 39 (QRDELNRAIADYLRSNGYEEAYSVFKKEAELDM). A coiled-coil region spans residues 56–82 (TSVIRLQKKVMELESKLNEAKEEFTSG). WD repeat units follow at residues 106–147 (GHRS…RTLK), 148–189 (GHTD…RTMH), 190–229 (GHDH…CVKT), 232–271 (GHRE…CKAE), 274–333 (EHEH…CLMT), 336–377 (GHDN…KTLN), and 379–410 (HEHF…WECR).

This sequence belongs to the WD repeat LIS1/nudF family. Can self-associate. Component of the cytosolic PAF-AH (I) heterotetrameric enzyme, which is composed of PAFAH1B1 (beta), PAFAH1B2 (alpha2) and PAFAH1B3 (alpha1) subunits. The catalytic activity of the enzyme resides in the alpha1 (PAFAH1B3) and alpha2 (PAFAH1B2) subunits, whereas the beta subunit (PAFAH1B1) has regulatory activity. Trimer formation is not essential for the catalytic activity. Interacts with dynein, dynactin, nde1 and ndel1.

It localises to the cytoplasm. The protein localises to the cytoskeleton. It is found in the microtubule organizing center. The protein resides in the centrosome. Its function is as follows. Regulatory subunit (beta subunit) of the cytosolic type I platelet-activating factor (PAF) acetylhydrolase (PAF-AH (I)), an enzyme that catalyzes the hydrolyze of the acetyl group at the sn-2 position of PAF and its analogs and participates in PAF inactivation. Regulates the PAF-AH (I) activity in a catalytic dimer composition-dependent manner. Positively regulates the activity of the minus-end directed microtubule motor protein dynein. May enhance dynein-mediated microtubule sliding by targeting dynein to the microtubule plus end. Required for several dynein- and microtubule-dependent processes such as the maintenance of Golgi integrity, the peripheral transport of microtubule fragments and the coupling of the nucleus and centrosome. May be required for proliferation of neuronal precursors and neuronal migration. This chain is Lissencephaly-1 homolog (pafah1b1), found in Xenopus laevis (African clawed frog).